The chain runs to 1686 residues: MPGGPSPRSPAPLLRPLLLLLCALAPGAPGPAPGRATEGRAALDIVHPVRVDAGGSFLSYELWPRALRKRDVSVRRDAPAFYELQYRGRELRFNLTANQHLLAPGFVSETRRRGGLGRAHIRAHTPACHLLGEVQDPELEGGLAAISACDGLKGVFQLSNEDYFIEPLDSAPARPGHAQPHVVYKRQAPERLAQRGDSSAPSTCGVQVYPELESRRERWEQRQQWRRPRLRRLHQRSVSKEKWVETLVVADAKMVEYHGQPQVESYVLTIMNMVAGLFHDPSIGNPIHITIVRLVLLEDEEEDLKITHHADNTLKSFCKWQKSINMKGDAHPLHHDTAILLTRKDLCAAMNRPCETLGLSHVAGMCQPHRSCSINEDTGLPLAFTVAHELGHSFGIQHDGSGNDCEPVGKRPFIMSPQLLYDAAPLTWSRCSRQYITRFLDRGWGLCLDDPPAKDIIDFPSVPPGVLYDVSHQCRLQYGAYSAFCEDMDNVCHTLWCSVGTTCHSKLDAAVDGTRCGENKWCLSGECVPVGFRPEAVDGGWSGWSAWSICSRSCGMGVQSAERQCTQPTPKYKGRYCVGERKRFRLCNLQACPAGRPSFRHVQCSHFDAMLYKGQLHTWVPVVNDVNPCELHCRPANEYFAEKLRDAVVDGTPCYQVRASRDLCINGICKNVGCDFEIDSGAMEDRCGVCHGNGSTCHTVSGTFEEAEGLGYVDVGLIPAGAREIRIQEVAEAANFLALRSEDPEKYFLNGGWTIQWNGDYQVAGTTFTYARRGNWENLTSPGPTKEPVWIQLLFQESNPGVHYEYTIHREAGGHDEVPPPVFSWHYGPWTKCTVTCGRGVQRQNVYCLERQAGPVDEEHCDPLGRPDDQQRKCSEQPCPARWWAGEWQLCSSSCGPGGLSRRAVLCIRSVGLDEQSALEPPACEHLPRPPTETPCNRHVPCPATWAVGNWSQCSVTCGEGTQRRNVLCTNDTGVPCDEAQQPASEVTCSLPLCRWPLGTLGPEGSGSGSSSHELFNEADFIPHHLAPRPSPASSPKPGTMGNAIEEEAPELDLPGPVFVDDFYYDYNFINFHEDLSYGPSEEPDLDLAGTGDRTPPPHSHPAAPSTGSPVPATEPPAAKEEGVLGPWSPSPWPSQAGRSPPPPSEQTPGNPLINFLPEEDTPIGAPDLGLPSLSWPRVSTDGLQTPATPESQNDFPVGKDSQSQLPPPWRDRTNEVFKDDEEPKGRGAPHLPPRPSSTLPPLSPVGSTHSSPSPDVAELWTGGTVAWEPALEGGLGPVDSELWPTVGVASLLPPPIAPLPEMKVRDSSLEPGTPSFPTPGPGSWDLQTVAVWGTFLPTTLTGLGHMPEPALNPGPKGQPESLSPEVPLSSRLLSTPAWDSPANSHRVPETQPLAPSLAEAGPPADPLVVRNAGWQAGNWSECSTTCGLGAVWRPVRCSSGRDEDCAPAGRPQPARRCHLRPCATWHSGNWSKCSRSCGGGSSVRDVQCVDTRDLRPLRPFHCQPGPAKPPAHRPCGAQPCLSWYTSSWRECSEACGGGEQQRLVTCPEPGLCEEALRPNTTRPCNTHPCTQWVVGPWGQCSGPCGGGVQRRLVKCVNTQTGLPEEDSDQCGHEAWPESSRPCGTEDCEPVEPPRCERDRLSFGFCETLRLLGRCQLPTIRTQCCRSCSPPSHGAPSRGHQRVARR.

The signal sequence occupies residues 1–27 (MPGGPSPRSPAPLLRPLLLLLCALAPG). A propeptide spanning residues 28 to 236 (APGPAPGRAT…RPRLRRLHQR (209 aa)) is cleaved from the precursor. Asn94 carries N-linked (GlcNAc...) asparagine glycosylation. The Cysteine switch signature appears at 202 to 209 (STCGVQVY). Residue Cys204 participates in Zn(2+) binding. Residues 242 to 452 (KWVETLVVAD…GWGLCLDDPP (211 aa)) form the Peptidase M12B domain. Cystine bridges form between Cys318/Cys372, Cys347/Cys354, Cys366/Cys447, Cys405/Cys431, Cys474/Cys497, Cys485/Cys503, Cys492/Cys522, Cys516/Cys527, Cys550/Cys587, Cys554/Cys592, and Cys565/Cys577. His388 contacts Zn(2+). Glu389 is a catalytic residue. The Zn(2+) site is built by His392 and His398. Residues 462–537 (VPPGVLYDVS…VPVGFRPEAV (76 aa)) form the Disintegrin domain. The 56-residue stretch at 538–593 (DGGWSGWSAWSICSRSCGMGVQSAERQCTQPTPKYKGRYCVGERKRFRLCNLQACP) folds into the TSP type-1 1 domain. N-linked (GlcNAc...) asparagine glycans are attached at residues Asn693 and Asn778. The spacer stretch occupies residues 698–809 (HTVSGTFEEA…PGVHYEYTIH (112 aa)). 3 TSP type-1 domains span residues 821–880 (PVFS…QPCP), 881–940 (ARWW…NRHV), and 942–995 (CPAT…PLCR). Disordered regions lie at residues 1024-1043 (HHLA…TMGN), 1080-1257 (PSEE…SPDV), and 1344-1396 (LGHM…PLAP). Residues 1182-1205 (DGLQTPATPESQNDFPVGKDSQSQ) are compositionally biased toward polar residues. Residues 1210-1226 (WRDRTNEVFKDDEEPKG) are compositionally biased toward basic and acidic residues. The segment covering 1360-1375 (PESLSPEVPLSSRLLS) has biased composition (low complexity). 4 TSP type-1 domains span residues 1411 to 1459 (RNAG…RRCH), 1462 to 1522 (PCAT…QPCL), 1523 to 1567 (SWYT…PCNT), and 1569 to 1629 (PCTQ…EDCE). The PLAC domain maps to 1632 to 1672 (EPPRCERDRLSFGFCETLRLLGRCQLPTIRTQCCRSCSPPS). Residues 1666–1686 (RSCSPPSHGAPSRGHQRVARR) form a disordered region.

In terms of assembly, interacts with COMP. It depends on Zn(2+) as a cofactor. Post-translationally, N-glycosylated. Can be O-fucosylated by POFUT2 on a serine or a threonine residue found within the consensus sequence C1-X(2)-(S/T)-C2-G of the TSP type-1 repeat domains where C1 and C2 are the first and second cysteine residue of the repeat, respectively. Fucosylated repeats can then be further glycosylated by the addition of a beta-1,3-glucose residue by the glucosyltransferase, B3GALTL. Fucosylation mediates the efficient secretion of ADAMTS family members. Can also be C-glycosylated with one or two mannose molecules on tryptophan residues within the consensus sequence W-X-X-W of the TPRs. N- and C-glycosylations can also facilitate secretion. In terms of processing, O-glycosylated proteoglycan; contains chondroitin sulfate. May be cleaved by a furin endopeptidase. The precursor is sequentially processed. Expressed in heart, brain, placenta, lung, liver, skeletal muscle, kidney and pancreas. Detected in meniscus, bone, tendon, cartilage, synovium, fat and ligaments.

It is found in the secreted. The protein resides in the extracellular space. The protein localises to the extracellular matrix. Its function is as follows. Metalloprotease. Was previously shown to degrade COMP. However, a later study found no activity against COMP. This chain is A disintegrin and metalloproteinase with thrombospondin motifs 7 (ADAMTS7), found in Homo sapiens (Human).